A 461-amino-acid chain; its full sequence is Fumarate hydratase class II (461 aa).

Substrate is bound by residues 97 to 99, 127 to 130, 137 to 139, and Thr185; these read SGT, HPND, and SSN. His186 (proton donor/acceptor) is an active-site residue. Ser316 is a catalytic residue. Residues Ser317 and 322–324 each bind substrate; that span reads KVN.

This sequence belongs to the class-II fumarase/aspartase family. Fumarase subfamily. Homotetramer.

The protein resides in the cytoplasm. It carries out the reaction (S)-malate = fumarate + H2O. Its pathway is carbohydrate metabolism; tricarboxylic acid cycle; (S)-malate from fumarate: step 1/1. Functionally, involved in the TCA cycle. Catalyzes the stereospecific interconversion of fumarate to L-malate. The polypeptide is Fumarate hydratase class II (Staphylococcus aureus (strain MRSA252)).